The following is a 377-amino-acid chain: Histidinol-phosphate aminotransferase (377 aa).

Residue lysine 232 is modified to N6-(pyridoxal phosphate)lysine.

It belongs to the class-II pyridoxal-phosphate-dependent aminotransferase family. Histidinol-phosphate aminotransferase subfamily. As to quaternary structure, homodimer. Pyridoxal 5'-phosphate is required as a cofactor.

It carries out the reaction L-histidinol phosphate + 2-oxoglutarate = 3-(imidazol-4-yl)-2-oxopropyl phosphate + L-glutamate. It functions in the pathway amino-acid biosynthesis; L-histidine biosynthesis; L-histidine from 5-phospho-alpha-D-ribose 1-diphosphate: step 7/9. This chain is Histidinol-phosphate aminotransferase, found in Mycobacterium sp. (strain JLS).